The chain runs to 42 residues: DRDSCVDKSRCAKYGYYQECQDCCKKAGHNGGTCMFFKCKCA.

Disulfide bonds link cysteine 5-cysteine 23, cysteine 11-cysteine 34, cysteine 20-cysteine 39, and cysteine 24-cysteine 41.

This sequence belongs to the ergtoxin family. Gamma-KTx 1 subfamily. Expressed by the venom gland.

It localises to the secreted. Functionally, blocks Kv11/ERG potassium channels. The sequence is that of Potassium channel toxin gamma-KTx 1.4 from Centruroides sculpturatus (Arizona bark scorpion).